The primary structure comprises 254 residues: Alcohol dehydrogenase (254 aa).

Residue F10–L33 participates in NAD(+) binding. A substrate-binding site is contributed by S138. Y151 serves as the catalytic Proton acceptor.

Belongs to the short-chain dehydrogenases/reductases (SDR) family. Homodimer.

It carries out the reaction a primary alcohol + NAD(+) = an aldehyde + NADH + H(+). The enzyme catalyses a secondary alcohol + NAD(+) = a ketone + NADH + H(+). The chain is Alcohol dehydrogenase (Adh) from Scaptomyza crassifemur (Fruit fly).